The following is a 207-amino-acid chain: Large ribosomal subunit protein uL4 (207 aa).

It belongs to the universal ribosomal protein uL4 family. In terms of assembly, part of the 50S ribosomal subunit.

Its function is as follows. One of the primary rRNA binding proteins, this protein initially binds near the 5'-end of the 23S rRNA. It is important during the early stages of 50S assembly. It makes multiple contacts with different domains of the 23S rRNA in the assembled 50S subunit and ribosome. Functionally, forms part of the polypeptide exit tunnel. This chain is Large ribosomal subunit protein uL4, found in Rickettsia rickettsii (strain Iowa).